The chain runs to 406 residues: Mitochondrial intermembrane space import and assembly protein 40 (406 aa).

Residues 1–23 (MFRVSLQATRRVAFRSARQIRFY) constitute a mitochondrion transit peptide. At 24–37 (SAHPPSGGVSHMNK) the chain is on the mitochondrial matrix side. Residues 38–54 (PALLLAGFSTLGAIYVA) form a helical; Signal-anchor for type II membrane protein membrane-spanning segment. Residues 55–406 (DGCPTLIERK…AVTNTDDEKK (352 aa)) are Mitochondrial intermembrane-facing. Disordered stretches follow at residues 67-110 (PAEK…TTPE) and 142-276 (VNEQ…PETG). The span at 205-224 (ASKDGSEGESDVVLHEKSPA) shows a compositional bias: basic and acidic residues. A compositionally biased stretch (low complexity) spans 242 to 260 (SGGTAEQSATAAAAAAGVQ). Intrachain disulfides connect Cys282-Cys284, Cys293-Cys326, and Cys303-Cys316. One can recognise a CHCH domain in the interval 290–334 (YGPCGEEFKSAFSCFVYSEADPKGINCVEKFSTMQNCFRKYPDYY). 2 short sequence motifs (cx9C motif) span residues 293–303 (CGEEFKSAFSC) and 316–326 (CVEKFSTMQNC). Disordered regions lie at residues 341-365 (EEEA…ATST) and 384-406 (EENP…DEKK). Residues 356–365 (TTPVSTATST) show a composition bias toward low complexity. Basic and acidic residues predominate over residues 384–393 (EENPQLKDTP).

As to quaternary structure, monomer. Cu(2+) is required as a cofactor. It depends on Zn(2+) as a cofactor.

It localises to the mitochondrion inner membrane. Functionally, required for the import and folding of small cysteine-containing proteins (small Tim) in the mitochondrial intermembrane space (IMS). Forms a redox cycle with ERV1 that involves a disulfide relay system. Precursor proteins to be imported into the IMS are translocated in their reduced form into the mitochondria. The oxidized form of MIA40 forms a transient intermolecular disulfide bridge with the reduced precursor protein, resulting in oxidation of the precursor protein that now contains an intramolecular disulfide bond and is able to undergo folding in the IMS. This chain is Mitochondrial intermembrane space import and assembly protein 40 (MIA40), found in Kluyveromyces lactis (strain ATCC 8585 / CBS 2359 / DSM 70799 / NBRC 1267 / NRRL Y-1140 / WM37) (Yeast).